Consider the following 442-residue polypeptide: tRNA-2-methylthio-N(6)-dimethylallyladenosine synthase (442 aa).

The MTTase N-terminal domain occupies 6 to 122; the sequence is RKFYIHTFGC…LPALIAEAGD (117 aa). Residues cysteine 15, cysteine 51, cysteine 85, cysteine 157, cysteine 161, and cysteine 164 each contribute to the [4Fe-4S] cluster site. In terms of domain architecture, Radical SAM core spans 143–373; that stretch reads RTQSLNAFVP…IDLQNGISAE (231 aa). The TRAM domain occupies 376-439; that stretch reads GLAPGSVVEV…SATLFGQSAE (64 aa).

The protein belongs to the methylthiotransferase family. MiaB subfamily. In terms of assembly, monomer. [4Fe-4S] cluster serves as cofactor.

It localises to the cytoplasm. It carries out the reaction N(6)-dimethylallyladenosine(37) in tRNA + (sulfur carrier)-SH + AH2 + 2 S-adenosyl-L-methionine = 2-methylsulfanyl-N(6)-dimethylallyladenosine(37) in tRNA + (sulfur carrier)-H + 5'-deoxyadenosine + L-methionine + A + S-adenosyl-L-homocysteine + 2 H(+). Functionally, catalyzes the methylthiolation of N6-(dimethylallyl)adenosine (i(6)A), leading to the formation of 2-methylthio-N6-(dimethylallyl)adenosine (ms(2)i(6)A) at position 37 in tRNAs that read codons beginning with uridine. This is tRNA-2-methylthio-N(6)-dimethylallyladenosine synthase from Chlorobium phaeobacteroides (strain DSM 266 / SMG 266 / 2430).